Here is a 1373-residue protein sequence, read N- to C-terminus: DNA-directed RNA polymerase subunit beta'' (1373 aa).

Residues Cys220, Cys291, Cys298, and Cys301 each contribute to the Zn(2+) site.

Belongs to the RNA polymerase beta' chain family. RpoC2 subfamily. In plastids the minimal PEP RNA polymerase catalytic core is composed of four subunits: alpha, beta, beta', and beta''. When a (nuclear-encoded) sigma factor is associated with the core the holoenzyme is formed, which can initiate transcription. It depends on Zn(2+) as a cofactor.

The protein resides in the plastid. It is found in the chloroplast. It carries out the reaction RNA(n) + a ribonucleoside 5'-triphosphate = RNA(n+1) + diphosphate. In terms of biological role, DNA-dependent RNA polymerase catalyzes the transcription of DNA into RNA using the four ribonucleoside triphosphates as substrates. This is DNA-directed RNA polymerase subunit beta'' from Silene latifolia (White campion).